The sequence spans 191 residues: MTHILRIDASARRDGSVSRDLTTQIVDLLGGEVTIRDLTTAIPQLDEAWIGANFTPADQRTAQQQETLSLSDTLVAEVQAADTLVIGLPIYNFGVPAALKAWVDQIARAGVTFQYTETGPKGLLEGKRAIVAVASGGTEAGSDIDFATGYMRHVLGFIGITDVTFVTADRLMVDPDAAHKTAQTQIEALAA.

FMN is bound by residues Ser10 and 16-18; that span reads SVS.

It belongs to the azoreductase type 1 family. In terms of assembly, homodimer. Requires FMN as cofactor.

It carries out the reaction 2 a quinone + NADH + H(+) = 2 a 1,4-benzosemiquinone + NAD(+). The catalysed reaction is N,N-dimethyl-1,4-phenylenediamine + anthranilate + 2 NAD(+) = 2-(4-dimethylaminophenyl)diazenylbenzoate + 2 NADH + 2 H(+). Quinone reductase that provides resistance to thiol-specific stress caused by electrophilic quinones. Its function is as follows. Also exhibits azoreductase activity. Catalyzes the reductive cleavage of the azo bond in aromatic azo compounds to the corresponding amines. This is FMN-dependent NADH:quinone oxidoreductase 1 from Jannaschia sp. (strain CCS1).